The chain runs to 327 residues: Petrobactin synthase (327 aa).

It catalyses the reaction N(8)-citryl-spermidine + 3,4-dihydroxybenzoyl-[aryl-carrier protein] = N(1)-(3,4-dihydroxybenzoyl)-N(8)-citryl-spermidine + holo-[aryl-carrier protein] + H(+). It carries out the reaction N(8),N'(8)-citryl-bis(spermidine) + 3,4-dihydroxybenzoyl-[aryl-carrier protein] = N(1)-(3,4-dihydroxybenzoyl)-N(8),N'(8)-citryl-bis(spermidine) + holo-[aryl-carrier protein] + H(+). The enzyme catalyses N(1)-(3,4-dihydroxybenzoyl)-N(8),N'(8)-citryl-bis(spermidine) + 3,4-dihydroxybenzoyl-[aryl-carrier protein] = petrobactin + holo-[aryl-carrier protein] + H(+). It participates in siderophore biosynthesis; petrobactin biosynthesis. In terms of biological role, involved in the biosynthesis of petrobactin, a catecholate siderophore that functions in both iron acquisition and virulence. Transfers the activated 3,4-dihydroxybenzoate (3,4-DHBA) moiety from 3,4-DHBA-loaded AsbD to different receipient molecules, including N-citryl-spermidine, N8,N'8-citryl-bis(spermidine) and N1-(3,4-dihydroxybenzoyl)-N8,N'8-citryl-bis(spermidine). Also catalyzes the transfer of the activated 3,4-DHBA moiety from 3,4-DHBA-loaded AsbD to spermidine to generate DHB-spermidine (DHB-SP). This is Petrobactin synthase from Bacillus anthracis.